Reading from the N-terminus, the 201-residue chain is uncharacterized protein (201 aa).

It belongs to the methyltransferase superfamily.

This is an uncharacterized protein from Bacillus subtilis (strain 168).